The chain runs to 414 residues: CinA-like protein (414 aa).

The protein belongs to the CinA family.

The sequence is that of CinA-like protein from Acidobacterium capsulatum (strain ATCC 51196 / DSM 11244 / BCRC 80197 / JCM 7670 / NBRC 15755 / NCIMB 13165 / 161).